We begin with the raw amino-acid sequence, 230 residues long: 7-cyano-7-deazaguanine synthase (230 aa).

9–19 (ISGGLDSTTCL) serves as a coordination point for ATP. 4 residues coordinate Zn(2+): cysteine 192, cysteine 202, cysteine 205, and cysteine 208.

It belongs to the QueC family. Requires Zn(2+) as cofactor.

It carries out the reaction 7-carboxy-7-deazaguanine + NH4(+) + ATP = 7-cyano-7-deazaguanine + ADP + phosphate + H2O + H(+). It participates in purine metabolism; 7-cyano-7-deazaguanine biosynthesis. In terms of biological role, catalyzes the ATP-dependent conversion of 7-carboxy-7-deazaguanine (CDG) to 7-cyano-7-deazaguanine (preQ(0)). This is 7-cyano-7-deazaguanine synthase from Myxococcus xanthus (strain DK1622).